The sequence spans 431 residues: Galactose-3-O-sulfotransferase 3 (431 aa).

Over 1–19 (MPPILQRLQQATKMMSRRK) the chain is Cytoplasmic. The helical; Signal-anchor for type II membrane protein transmembrane segment at 20–40 (ILLLVLGCSTVSLLIHQGAQL) threads the bilayer. The Lumenal segment spans residues 41-431 (SWYPKLFPLS…RVLPRGPQGP (391 aa)). N-linked (GlcNAc...) asparagine glycosylation is found at asparagine 91, asparagine 110, asparagine 177, and asparagine 302. The tract at residues 399 to 431 (QKRRGGARARPEPVLDNPPPRPIRVLPRGPQGP) is disordered.

This sequence belongs to the galactose-3-O-sulfotransferase family. Mg(2+) serves as cofactor. As to expression, highly expressed in thyroid, brain, kidney, heart and spinal cord.

Its subcellular location is the golgi apparatus. It is found in the golgi stack membrane. The protein operates within protein modification; carbohydrate sulfation. Its function is as follows. Transfers a sulfate to position 3 of non-reducing beta-galactosyl residues in N-glycans and core2-branched O-glycans. Has high activity towards Gal-beta-1,4-GlcNAc, Gal-beta-1,4(Fuc-alpha-1,3)GlcNAc and lower activity towards Gal-beta-1,3(Fuc-alpha-1,4)GlcNAc. This Homo sapiens (Human) protein is Galactose-3-O-sulfotransferase 3 (GAL3ST3).